A 311-amino-acid polypeptide reads, in one-letter code: Methionyl-tRNA formyltransferase (311 aa).

110–113 lines the (6S)-5,6,7,8-tetrahydrofolate pocket; that stretch reads SLLP.

It belongs to the Fmt family.

It catalyses the reaction L-methionyl-tRNA(fMet) + (6R)-10-formyltetrahydrofolate = N-formyl-L-methionyl-tRNA(fMet) + (6S)-5,6,7,8-tetrahydrofolate + H(+). Its function is as follows. Attaches a formyl group to the free amino group of methionyl-tRNA(fMet). The formyl group appears to play a dual role in the initiator identity of N-formylmethionyl-tRNA by promoting its recognition by IF2 and preventing the misappropriation of this tRNA by the elongation apparatus. The polypeptide is Methionyl-tRNA formyltransferase (Streptococcus pyogenes serotype M1).